The sequence spans 470 residues: Cell division protein FtsP (470 aa).

The segment at residues 1–27 is a signal peptide (tat-type signal); sequence MSFSRRQFLQASGIALCAGAIPLRANA. The region spanning 222–287 is the Plastocyanin-like domain; it reads VEVSRGWVRL…RREILVDMTN (66 aa).

This sequence belongs to the FtsP family. Predicted to be exported by the Tat system. The position of the signal peptide cleavage has not been experimentally proven.

It localises to the periplasm. Cell division protein that is required for growth during stress conditions. May be involved in protecting or stabilizing the divisomal assembly under conditions of stress. The chain is Cell division protein FtsP from Salmonella typhi.